Consider the following 362-residue polypeptide: Aminomethyltransferase (362 aa).

The protein belongs to the GcvT family. The glycine cleavage system is composed of four proteins: P, T, L and H.

It catalyses the reaction N(6)-[(R)-S(8)-aminomethyldihydrolipoyl]-L-lysyl-[protein] + (6S)-5,6,7,8-tetrahydrofolate = N(6)-[(R)-dihydrolipoyl]-L-lysyl-[protein] + (6R)-5,10-methylene-5,6,7,8-tetrahydrofolate + NH4(+). In terms of biological role, the glycine cleavage system catalyzes the degradation of glycine. This Colwellia psychrerythraea (strain 34H / ATCC BAA-681) (Vibrio psychroerythus) protein is Aminomethyltransferase.